We begin with the raw amino-acid sequence, 410 residues long: Peptide chain release factor subunit 1 (410 aa).

The protein belongs to the eukaryotic release factor 1 family. Heterodimer of two subunits, one of which binds GTP.

The protein resides in the cytoplasm. Directs the termination of nascent peptide synthesis (translation) in response to the termination codons UAA, UAG and UGA. This Picrophilus torridus (strain ATCC 700027 / DSM 9790 / JCM 10055 / NBRC 100828 / KAW 2/3) protein is Peptide chain release factor subunit 1.